Consider the following 311-residue polypeptide: Tricarboxylate transport protein, mitochondrial (311 aa).

A propeptide spans 1-13 (removed in mature form); it reads MAAARAPRALTSA. Residues 1–15 are compositionally biased toward low complexity; the sequence is MAAARAPRALTSASP. Residues 1–22 are disordered; the sequence is MAAARAPRALTSASPGSGKAKL. Solcar repeat units follow at residues 23–111, 122–208, and 218–303; these read THPG…LSNH, TRGL…LRNW, and MNPL…VVKL. The next 3 helical transmembrane spans lie at 29–46, 86–105, and 129–143; these read ILAGGLAGGIEICITFPT, GLSSLLYGSIPKAAVRFGTF, and LGAGVPEAVVVVCPM. Phosphoserine is present on S156. A run of 3 helical transmembrane segments spans residues 183–202, 224–241, and 278–297; these read GLTATVLKQGSNQGIRFFVM, GVFGAIAGAASVFGNTPL, and GTVPRLGRVCLDVAIVFIIY.

It belongs to the mitochondrial carrier (TC 2.A.29) family. Possesses a short cleavable presequence, which, however, is found to be dispensable both for targeting to mitochondria and insertion into the inner membrane. However, the presequence is required to keep SLC25A1 in a soluble state and thus in an import-competent state. Mature SLC25A1 lacking the presequence is prone to aggregation.

Its subcellular location is the mitochondrion inner membrane. It localises to the mitochondrion membrane. The catalysed reaction is (S)-malate(in) + citrate(out) = (S)-malate(out) + citrate(in). It catalyses the reaction D-threo-isocitrate(in) + citrate(out) = D-threo-isocitrate(out) + citrate(in). The enzyme catalyses citrate(out) + succinate(in) = citrate(in) + succinate(out). It carries out the reaction phosphoenolpyruvate(in) + citrate(out) = phosphoenolpyruvate(out) + citrate(in). The catalysed reaction is cis-aconitate(in) + citrate(out) = cis-aconitate(out) + citrate(in). It catalyses the reaction trans-aconitate(in) + citrate(out) = trans-aconitate(out) + citrate(in). The enzyme catalyses maleate(in) + citrate(out) = maleate(out) + citrate(in). In terms of biological role, mitochondrial electroneutral antiporter that exports citrate from the mitochondria into the cytosol in exchange for malate. Also able to mediate the exchange of citrate for isocitrate, phosphoenolpyruvate, cis-aconitate and to a lesser extent trans-aconitate, maleate and succinate. In the cytoplasm, citrate plays important roles in fatty acid and sterol synthesis, regulation of glycolysis, protein acetylation, and other physiopathological processes. The chain is Tricarboxylate transport protein, mitochondrial (SLC25A1) from Bos taurus (Bovine).